A 1215-amino-acid polypeptide reads, in one-letter code: Homeodomain-interacting protein kinase 3 (1215 aa).

A Glycyl lysine isopeptide (Lys-Gly) (interchain with G-Cter in SUMO2) cross-link involves residue Lys-27. The 329-residue stretch at 197-525 (YEVLDFLGRG…PAETLNHPFV (329 aa)) folds into the Protein kinase domain. ATP contacts are provided by residues 203-211 (LGRGTFGQV) and Lys-226. Asp-322 serves as the catalytic Proton acceptor. At Tyr-359 the chain carries Phosphotyrosine. Residues 767–944 (QNRGILVKLM…NSMSDEEQES (178 aa)) are interaction with AR. Positions 796 to 891 (NTNIPHSAFI…SQRHSLRECK (96 aa)) are interaction with FAS. Positions 855–1011 (QTIIIADSPS…ENGLNADEHM (157 aa)) are required for localization to nuclear speckles. Residues 866-918 (AVSVITISSDTDEEETSQRHSLRECKGSLDCEACQSTLNIDRMCSLSSPDSTL) are SUMO interaction motifs (SIM); required for nuclear localization and kinase activity. The interaction with UBL1 stretch occupies residues 870–880 (ITISSDTDEEE). Positions 912-929 (SSPDSTLSTSSSGQSSPS) are enriched in low complexity. The segment at 912-987 (SSPDSTLSTS…ELVSSADTET (76 aa)) is disordered. Residues 945 to 957 (SCDTVDGSPTSDS) are compositionally biased toward polar residues. Residue Lys-1208 forms a Glycyl lysine isopeptide (Lys-Gly) (interchain with G-Cter in SUMO) linkage.

The protein belongs to the protein kinase superfamily. CMGC Ser/Thr protein kinase family. HIPK subfamily. As to quaternary structure, interacts with Nkx1-2. Interacts with FAS and DAXX. Probably part of a complex consisting of HIPK3, FAS and FADD. Interacts with and stabilizes ligand-bound androgen receptor (AR). Interacts with UBL1/SUMO-1. Binds to NR5A1/SF1, SPEN/MINT and RUNX2. Autophosphorylated, but autophosphorylation is not required for catalytic activity. In terms of processing, may be sumoylated. In terms of tissue distribution, overexpressed in multidrug resistant cells. Highly expressed in heart and skeletal muscle, and at lower levels in placenta, pancreas, brain, spleen, prostate, thymus, testis, small intestine, colon and leukocytes. Not found in liver and lung.

It is found in the cytoplasm. The protein resides in the nucleus. The enzyme catalyses L-seryl-[protein] + ATP = O-phospho-L-seryl-[protein] + ADP + H(+). It catalyses the reaction L-threonyl-[protein] + ATP = O-phospho-L-threonyl-[protein] + ADP + H(+). Functionally, serine/threonine-protein kinase involved in transcription regulation, apoptosis and steroidogenic gene expression. Phosphorylates JUN and RUNX2. Seems to negatively regulate apoptosis by promoting FADD phosphorylation. Enhances androgen receptor-mediated transcription. May act as a transcriptional corepressor for NK homeodomain transcription factors. The phosphorylation of NR5A1 activates SF1 leading to increased steroidogenic gene expression upon cAMP signaling pathway stimulation. In osteoblasts, supports transcription activation: phosphorylates RUNX2 that synergizes with SPEN/MINT to enhance FGFR2-mediated activation of the osteocalcin FGF-responsive element (OCFRE). The protein is Homeodomain-interacting protein kinase 3 (HIPK3) of Homo sapiens (Human).